The following is a 300-amino-acid chain: tRNA dimethylallyltransferase 1 (300 aa).

13 to 20 is a binding site for ATP; it reads GPTGVGKT. Residue 15–20 coordinates substrate; it reads TGVGKT. The segment at 38-41 is interaction with substrate tRNA; that stretch reads DSRQ.

Belongs to the IPP transferase family. Monomer. Mg(2+) is required as a cofactor.

It carries out the reaction adenosine(37) in tRNA + dimethylallyl diphosphate = N(6)-dimethylallyladenosine(37) in tRNA + diphosphate. Its function is as follows. Catalyzes the transfer of a dimethylallyl group onto the adenine at position 37 in tRNAs that read codons beginning with uridine, leading to the formation of N6-(dimethylallyl)adenosine (i(6)A). The protein is tRNA dimethylallyltransferase 1 of Porphyromonas gingivalis (strain ATCC BAA-308 / W83).